A 686-amino-acid chain; its full sequence is Glycine--tRNA ligase beta subunit (686 aa).

This sequence belongs to the class-II aminoacyl-tRNA synthetase family. As to quaternary structure, tetramer of two alpha and two beta subunits.

The protein localises to the cytoplasm. It catalyses the reaction tRNA(Gly) + glycine + ATP = glycyl-tRNA(Gly) + AMP + diphosphate. In Halothermothrix orenii (strain H 168 / OCM 544 / DSM 9562), this protein is Glycine--tRNA ligase beta subunit.